The chain runs to 364 residues: Probable zinc transporter 10 (364 aa).

The signal sequence occupies residues Met-1–Ser-28. Residues Gln-29–Lys-52 lie on the Extracellular side of the membrane. A helical transmembrane segment spans residues Leu-53–Ala-73. At Arg-74–His-85 the chain is on the cytoplasmic side. The chain crosses the membrane as a helical span at residues Phe-86–Leu-106. The Extracellular segment spans residues Pro-107–Lys-125. A helical transmembrane segment spans residues Phe-126–Ile-146. At Thr-147–Arg-209 the chain is on the cytoplasmic side. Residues Ile-210–Val-230 traverse the membrane as a helical segment. Residues Gly-231–Gly-241 lie on the Extracellular side of the membrane. A helical membrane pass occupies residues Leu-242–Leu-262. The Cytoplasmic segment spans residues Gln-263–Lys-271. The helical transmembrane segment at Ala-272–Leu-292 threads the bilayer. Residues Ser-293–Ser-303 lie on the Extracellular side of the membrane. The chain crosses the membrane as a helical span at residues Leu-304–Val-324. Residues Asp-325–Gln-343 are Cytoplasmic-facing. A helical membrane pass occupies residues Leu-344 to Ala-364.

The protein belongs to the ZIP transporter (TC 2.A.5) family.

The protein localises to the cell membrane. Functionally, probably mediates zinc uptake from the rhizosphere. This Arabidopsis thaliana (Mouse-ear cress) protein is Probable zinc transporter 10 (ZIP10).